We begin with the raw amino-acid sequence, 425 residues long: Histone-binding protein RBBP7 (425 aa).

A2 carries the N-acetylalanine modification. S3 is modified (phosphoserine). K4 carries the N6-acetyllysine; alternate modification. K4 participates in a covalent cross-link: Glycyl lysine isopeptide (Lys-Gly) (interchain with G-Cter in SUMO2); alternate. Residue K4 forms a Glycyl lysine isopeptide (Lys-Gly) (interchain with G-Cter in ubiquitin); alternate linkage. T10 carries the phosphothreonine modification. 2 positions are modified to phosphoserine: E13 and S95. 7 WD repeats span residues 47–122 (QWLP…KINH), 128–173 (RARY…LRLR), 181–217 (GLSW…KIVD), 228–269 (VVED…HLVD), 275–312 (VNCL…LHTF), 318–369 (EIFQ…LFIH), and 376–403 (ISDF…IWQM). Residue K101 forms a Glycyl lysine isopeptide (Lys-Gly) (interchain with G-Cter in SUMO2) linkage. At K119 the chain carries N6-acetyllysine. K155 participates in a covalent cross-link: Glycyl lysine isopeptide (Lys-Gly) (interchain with G-Cter in SUMO2). K159 is modified (N6-acetyllysine; alternate). K159 participates in a covalent cross-link: Glycyl lysine isopeptide (Lys-Gly) (interchain with G-Cter in SUMO2); alternate. Position 354 is a phosphoserine (S354).

The protein belongs to the WD repeat RBAP46/RBAP48/MSI1 family. As to quaternary structure, binds directly to helix 1 of the histone fold of histone H4, a region that is not accessible when H4 is in chromatin. Subunit of the type B histone acetyltransferase (HAT) complex, composed of RBBP7 and HAT1. Subunit of the core histone deacetylase (HDAC) complex, which is composed of HDAC1, HDAC2, RBBP4 and RBBP7. The core HDAC complex associates with SIN3A, ARID4B/SAP180, SAP18, SAP30, SAP130, SUDS3/SAP45 and possibly ARID4A/RBP1 and ING1 to form the SIN3 HDAC complex. Component of the nucleosome remodeling and deacetylase (NuRD) repressor complex, composed of core proteins MTA1, MTA2, MTA3, RBBP4, RBBP7, HDAC1, HDAC2, MBD2, MBD3, and peripherally associated proteins CDK2AP1, CDK2AP2, GATAD2A, GATAD2B, CHD3, CHD4 and CHD5. The exact stoichiometry of the NuRD complex is unknown, and some subunits such as MBD2 and MBD3, GATAD2A and GATAD2B, and CHD3, CHD4 and CHD5 define mutually exclusive NuRD complexes. The NuRD complex may interact with MBD3L1. The NuRD complex may interact with MBD3L2. Subunit of the PRC2/EED-EZH2 complex, which is composed of at least EED, EZH2, RBBP4, RBBP7 and SUZ12. The PRC2/EED-EZH2 complex may also associate with HDAC1. Component of the NURF-1 ISWI chromatin remodeling complex (also called the nucleosome-remodeling factor (NURF) complex) at least composed of SMARCA1 (isoform 2), BPTF, RBBP4 and RBBP7. Within the complex interacts with isoform 2 of SMARCA1. Component of the BPFT-SMARCA1 complex at least composed of SMARCA1 (isoform 1), BPFT, RBBP4 and RBBP7; the complex is catalytically inactive and does not remodel chromatin. Within the complex interacts with isoform 1 of SMARCA1. Interacts with BRCA1. Interacts with CDK2AP1. Interacts with CENPA. Interacts with CHD3. Interacts with CHD4. Interacts with CREBBP, and this interaction may be enhanced by the binding of phosphorylated CREB1 to CREBBP. Interacts with HDAC7. Interacts with MTA1. Interacts with PWWP2B. Interacts with RB1 (via viral protein-binding domain). Interacts with SUV39H1.

The protein resides in the nucleus. Functionally, core histone-binding subunit that may target chromatin remodeling factors, histone acetyltransferases and histone deacetylases to their histone substrates in a manner that is regulated by nucleosomal DNA. Component of several complexes which regulate chromatin metabolism. These include the type B histone acetyltransferase (HAT) complex, which is required for chromatin assembly following DNA replication; the core histone deacetylase (HDAC) complex, which promotes histone deacetylation and consequent transcriptional repression; the nucleosome remodeling and histone deacetylase complex (the NuRD complex), which promotes transcriptional repression by histone deacetylation and nucleosome remodeling; and the PRC2/EED-EZH2 complex, which promotes repression of homeotic genes during development; and the NURF (nucleosome remodeling factor) complex. The protein is Histone-binding protein RBBP7 (RBBP7) of Homo sapiens (Human).